The chain runs to 304 residues: Glutaminase (304 aa).

Positions 63, 113, 157, 164, 188, 240, and 258 each coordinate substrate.

The protein belongs to the glutaminase family. Homotetramer.

It carries out the reaction L-glutamine + H2O = L-glutamate + NH4(+). This chain is Glutaminase, found in Paraburkholderia phytofirmans (strain DSM 17436 / LMG 22146 / PsJN) (Burkholderia phytofirmans).